Here is a 93-residue protein sequence, read N- to C-terminus: Ribonuclease P protein component 1 (93 aa).

The protein belongs to the eukaryotic/archaeal RNase P protein component 1 family. In terms of assembly, consists of a catalytic RNA component and at least 4-5 protein subunits.

It localises to the cytoplasm. The catalysed reaction is Endonucleolytic cleavage of RNA, removing 5'-extranucleotides from tRNA precursor.. Part of ribonuclease P, a protein complex that generates mature tRNA molecules by cleaving their 5'-ends. This Methanothermobacter thermautotrophicus (strain ATCC 29096 / DSM 1053 / JCM 10044 / NBRC 100330 / Delta H) (Methanobacterium thermoautotrophicum) protein is Ribonuclease P protein component 1.